Consider the following 124-residue polypeptide: PEP-dependent dihydroxyacetone kinase 1, phosphoryl donor subunit DhaM (124 aa).

Positions 4 to 124 (PYGVVIISHS…AANLKTIEIK (121 aa)) constitute a PTS EIIA type-4 domain. Residue histidine 12 is the Tele-phosphohistidine intermediate of the active site.

It belongs to the PEP-utilizing enzyme family. In terms of assembly, homodimer. The dihydroxyacetone kinase complex is composed of a homodimer of DhaM, a homodimer of DhaK and the subunit DhaL.

The protein resides in the cytoplasm. The enzyme catalyses dihydroxyacetone + phosphoenolpyruvate = dihydroxyacetone phosphate + pyruvate. Its function is as follows. Component of the dihydroxyacetone kinase complex, which is responsible for the phosphoenolpyruvate (PEP)-dependent phosphorylation of dihydroxyacetone. DhaM serves as the phosphoryl donor. Is phosphorylated by phosphoenolpyruvate in an EI- and HPr-dependent reaction, and a phosphorelay system on histidine residues finally leads to phosphoryl transfer to DhaL and dihydroxyacetone. The protein is PEP-dependent dihydroxyacetone kinase 1, phosphoryl donor subunit DhaM of Listeria innocua serovar 6a (strain ATCC BAA-680 / CLIP 11262).